Consider the following 235-residue polypeptide: Modulator of macroautophagy TMEM150B (235 aa).

Residues 1–8 (MWGYLSLL) lie on the Cytoplasmic side of the membrane. Residues 9-29 (PMCLAFWAIAGIWTVFSLAVV) traverse the membrane as a helical segment. Topologically, residues 30 to 51 (NKAVNLTDGFPYISVCGNVPPQ) are extracellular. The N-linked (GlcNAc...) asparagine glycan is linked to Asn34. Residues 52 to 72 (SCIFSQVLNIGAASAAWICIL) form a helical membrane-spanning segment. Residues 73 to 88 (RYYQLRDWGVRKWHNQ) lie on the Cytoplasmic side of the membrane. The chain crosses the membrane as a helical span at residues 89 to 109 (VILWTGLLCALGTSIVGNFQE). Over 110 to 116 (KNQRATH) the chain is Extracellular. Residues 117-137 (LTGAFLAFFVGIVYFWLQLFL) traverse the membrane as a helical segment. Over 138-156 (SWRMKNLPQPGAPWIGPLR) the chain is Cytoplasmic. A helical transmembrane segment spans residues 157-177 (LVLCSACFILEVAMVVLHSWS). Residues 178 to 180 (MRS) are Extracellular-facing. A helical membrane pass occupies residues 181-201 (VSAICEWVAAMLLFILFGLLA). The Cytoplasmic segment spans residues 202–235 (VDFSRLDSCTLCLQPGSGSLRPPPDSPTSLHVQL).

It belongs to the DRAM/TMEM150 family.

It localises to the cell membrane. The protein resides in the endosome membrane. It is found in the cytoplasmic vesicle. The protein localises to the autophagosome membrane. Its function is as follows. Modulator of macroautophagy that causes accumulation of autophagosomes under basal conditions and enhances autophagic flux. Represses cell death and promotes long-term clonogenic survival of cells grown in the absence of glucose in a macroautophagy-independent manner. May have some role in extracellular matrix engulfment or growth factor receptor recycling, both of which can modulate cell survival. This Bos taurus (Bovine) protein is Modulator of macroautophagy TMEM150B.